We begin with the raw amino-acid sequence, 267 residues long: Putative transcription factor Ovo-like 1 (267 aa).

4 consecutive C2H2-type zinc fingers follow at residues 118–140 (FTCR…MKCH), 146–168 (HLCT…VRTH), 174–197 (YKCS…KKIH), and 213–235 (YVCE…LKEH).

Expressed in fetal kidney, and also in adult pancreas and placenta. Not expressed in intestine, peripheral blood lymphocytes and ovary.

The protein localises to the nucleus. In terms of biological role, putative transcription factor. Involved in hair formation and spermatogenesis. May function in the differentiation and/or maintenance of the urogenital system. This Homo sapiens (Human) protein is Putative transcription factor Ovo-like 1 (OVOL1).